A 324-amino-acid chain; its full sequence is Mevalonate kinase (324 aa).

Position 103-113 (103-113) interacts with ATP; sequence PPRAGLGSSAA. Residue Asp-154 is the Proton acceptor of the active site.

Belongs to the GHMP kinase family. Mevalonate kinase subfamily. Homodimer. Mg(2+) serves as cofactor.

The protein resides in the cytoplasm. The enzyme catalyses (R)-mevalonate + ATP = (R)-5-phosphomevalonate + ADP + H(+). It functions in the pathway isoprenoid biosynthesis; isopentenyl diphosphate biosynthesis via mevalonate pathway; isopentenyl diphosphate from (R)-mevalonate: step 1/3. In terms of biological role, catalyzes the phosphorylation of (R)-mevalonate (MVA) to (R)-mevalonate 5-phosphate (MVAP). Functions in the mevalonate (MVA) pathway leading to isopentenyl diphosphate (IPP), a key precursor for the biosynthesis of isoprenoid compounds such as archaeal membrane lipids. The polypeptide is Mevalonate kinase (Aeropyrum pernix (strain ATCC 700893 / DSM 11879 / JCM 9820 / NBRC 100138 / K1)).